We begin with the raw amino-acid sequence, 924 residues long: TBC1 domain family member 30 (924 aa).

Residues 1–11 (MDVLPTGGGRP) show a composition bias toward gly residues. Disordered stretches follow at residues 1-76 (MDVL…GRTS) and 94-134 (EEEE…RSGA). Residues 47–59 (GAAERPRRSRDTW) show a composition bias toward basic and acidic residues. The Rab-GAP TBC domain occupies 249–457 (GIPKEWRRKV…KIWDSVFFEG (209 aa)). Disordered stretches follow at residues 541–564 (KPTS…PDDE), 776–806 (GCTA…PVFG), and 838–924 (HPPC…TKKR). Residues 555-564 (SDEENDPDDE) are compositionally biased toward acidic residues. Serine 800 is subject to Phosphoserine. Positions 858 to 870 (TSKAPQGSNSKTP) are enriched in polar residues. Positions 914–924 (PGGGNSGTKKR) are enriched in gly residues.

It is found in the cell membrane. Functionally, may act as a GTPase-activating protein for Rab family protein(s). The polypeptide is TBC1 domain family member 30 (TBC1D30) (Homo sapiens (Human)).